A 544-amino-acid polypeptide reads, in one-letter code: Probable protein kinase UbiB (544 aa).

The region spanning 123–501 is the Protein kinase domain; the sequence is DFDLVPLASA…KRQQATGKFL (379 aa). ATP contacts are provided by residues 129–137 and K152; that span reads LASASIAQV. D287 (proton acceptor) is an active-site residue. The next 2 membrane-spanning stretches (helical) occupy residues 496–516 and 519–539; these read ATGK…AILV and TYEQ…LFSW.

The protein belongs to the ABC1 family. UbiB subfamily.

It is found in the cell inner membrane. The protein operates within cofactor biosynthesis; ubiquinone biosynthesis [regulation]. Functionally, is probably a protein kinase regulator of UbiI activity which is involved in aerobic coenzyme Q (ubiquinone) biosynthesis. In Vibrio vulnificus (strain YJ016), this protein is Probable protein kinase UbiB.